A 232-amino-acid chain; its full sequence is MPKHGKKLTEALKQVDRSVLYDPAEAFELLKKVAPAKFDETVEVAVRLGVDPRHADQQVRGAVVLPHGTGKTRTVLVFAKGDKAREAEEAGADFVGAEDMVARIQQEGWLGFDVAIATPDMMGMVGKLGRILGPRGLMPNPKTGTVTFDIARAVKEVKAGKIEYRVDKAGIIHAPIGKVSFSTEKLVENLRTLIEALIRAKPAAAKGQYLKGISVSSTMGPGIKVNTQKVTA.

It belongs to the universal ribosomal protein uL1 family. As to quaternary structure, part of the 50S ribosomal subunit.

Its function is as follows. Binds directly to 23S rRNA. The L1 stalk is quite mobile in the ribosome, and is involved in E site tRNA release. Functionally, protein L1 is also a translational repressor protein, it controls the translation of the L11 operon by binding to its mRNA. This chain is Large ribosomal subunit protein uL1, found in Pelotomaculum thermopropionicum (strain DSM 13744 / JCM 10971 / SI).